The primary structure comprises 1428 residues: DNA-directed RNA polymerase subunit beta' (1428 aa).

Cys66, Cys68, Cys81, and Cys84 together coordinate Zn(2+). Positions 472, 474, and 476 each coordinate Mg(2+). The Zn(2+) site is built by Cys816, Cys890, Cys897, and Cys900.

The protein belongs to the RNA polymerase beta' chain family. In terms of assembly, the RNAP catalytic core consists of 2 alpha, 1 beta, 1 beta' and 1 omega subunit. When a sigma factor is associated with the core the holoenzyme is formed, which can initiate transcription. Mg(2+) is required as a cofactor. It depends on Zn(2+) as a cofactor.

It catalyses the reaction RNA(n) + a ribonucleoside 5'-triphosphate = RNA(n+1) + diphosphate. Its function is as follows. DNA-dependent RNA polymerase catalyzes the transcription of DNA into RNA using the four ribonucleoside triphosphates as substrates. This is DNA-directed RNA polymerase subunit beta' from Phocaeicola vulgatus (strain ATCC 8482 / DSM 1447 / JCM 5826 / CCUG 4940 / NBRC 14291 / NCTC 11154) (Bacteroides vulgatus).